Here is a 599-residue protein sequence, read N- to C-terminus: Dual specificity tyrosine-phosphorylation-regulated kinase 2 (599 aa).

The disordered stretch occupies residues Met-1–Leu-55. At Ser-30 the chain carries Phosphoserine. A Phosphothreonine; by ATM modification is found at Thr-104. The Nuclear localization signal motif lies at Lys-187–Arg-189. The 314-residue stretch at Tyr-220–Leu-533 folds into the Protein kinase domain. Residues Ile-226–Val-234, Lys-249, and Phe-299–Leu-302 contribute to the ATP site. Residue Asp-346 is the Proton acceptor of the active site. Position 379 is a phosphothreonine; by MAP3K10 (Thr-379). Tyr-380 bears the Phosphotyrosine; by autocatalysis mark. At Ser-440 the chain carries Phosphoserine; by ATM. Ser-447 is modified (phosphoserine; by MAP3K10).

It belongs to the protein kinase superfamily. CMGC Ser/Thr protein kinase family. MNB/DYRK subfamily. Component of an E3 ligase complex containing DYRK2, EDD/UBR5, DDB1 and DCAF1 (EDVP complex). Interacts directly with EDD/UBR5, DDB1 and DCAF1. Interacts with SIAH2 and MDM2. Interacts with MAP3K10 and NFATC1. May also interact with CCNL2. Mg(2+) serves as cofactor. Mn(2+) is required as a cofactor. In terms of processing, autophosphorylates cotranslationally on the second tyrosine residue in the Tyr-X-Tyr motif in the activation loop, but once mature, does not have any protein tyrosine kinase activity. Phosphorylated at Thr-104 and Ser-440 by ATM in response to genotoxic stress. Under normal conditions, polyubiquitinated in the nucleus by MDM2, leading to its proteasomal degradation. Phosphorylation on Thr-104 and Ser-440 by ATM in response to genotoxic stress disrupts MDM2 binding and prevents MDM2-mediated ubiquitination and subsequent proteasomal degradation. Polyubiquitinated by SIAH2, leading to its proteasomal degradation. Polyubiquitinated by SIAH2 occurs under normal conditions, and is enhanced in response to hypoxia.

It is found in the cytoplasm. Its subcellular location is the nucleus. It catalyses the reaction L-seryl-[protein] + ATP = O-phospho-L-seryl-[protein] + ADP + H(+). The enzyme catalyses L-threonyl-[protein] + ATP = O-phospho-L-threonyl-[protein] + ADP + H(+). It carries out the reaction L-tyrosyl-[protein] + ATP = O-phospho-L-tyrosyl-[protein] + ADP + H(+). Activated by autophosphorylation on the second tyrosine residue in the Tyr-X-Tyr motif in the activation loop. Serine/threonine-protein kinase involved in the regulation of the mitotic cell cycle, cell proliferation, apoptosis, organization of the cytoskeleton and neurite outgrowth. Functions in part via its role in ubiquitin-dependent proteasomal protein degradation. Functions downstream of ATM and phosphorylates p53/TP53 at 'Ser-46', and thereby contributes to the induction of apoptosis in response to DNA damage. Phosphorylates NFATC1, and thereby inhibits its accumulation in the nucleus and its transcription factor activity. Phosphorylates EIF2B5 at 'Ser-544', enabling its subsequent phosphorylation and inhibition by GSK3B. Likewise, phosphorylation of NFATC1, CRMP2/DPYSL2 and CRMP4/DPYSL3 promotes their subsequent phosphorylation by GSK3B. May play a general role in the priming of GSK3 substrates. Inactivates GYS1 by phosphorylation at 'Ser-641', and potentially also a second phosphorylation site, thus regulating glycogen synthesis. Mediates EDVP E3 ligase complex formation and is required for the phosphorylation and subsequent degradation of KATNA1. Phosphorylates TERT at 'Ser-457', promoting TERT ubiquitination by the EDVP complex. Phosphorylates SIAH2, and thereby increases its ubiquitin ligase activity. Promotes the proteasomal degradation of MYC and JUN, and thereby regulates progress through the mitotic cell cycle and cell proliferation. Promotes proteasomal degradation of GLI2 and GLI3, and thereby plays a role in smoothened and sonic hedgehog signaling. Phosphorylates CRMP2/DPYSL2, CRMP4/DPYSL3, DCX, EIF2B5, EIF4EBP1, GLI2, GLI3, GYS1, JUN, MDM2, MYC, NFATC1, p53/TP53, TAU/MAPT and KATNA1. Can phosphorylate histone H1, histone H3 and histone H2B (in vitro). Can phosphorylate CARHSP1 (in vitro). Plays a role in cytoskeleton organization and neurite outgrowth via its phosphorylation of DCX. This is Dual specificity tyrosine-phosphorylation-regulated kinase 2 from Mus musculus (Mouse).